A 261-amino-acid chain; its full sequence is Cytochrome c oxidase subunit 3 (261 aa).

Topologically, residues 1 to 15 (MTHQTHAYHMVNPSP) are mitochondrial matrix. A helical transmembrane segment spans residues 16 to 34 (WPLTGALSALLMTSGLTMW). Residues 35-40 (FHFNSM) lie on the Mitochondrial intermembrane side of the membrane. Residues 41 to 66 (TLLTLGLTTNMLTMYQWWRDIIREST) form a helical membrane-spanning segment. At 67-72 (FQGHHT) the chain is on the mitochondrial matrix side. A helical membrane pass occupies residues 73-105 (PNVQKGLRYGMILFIISEVLFFTGFFWAFYHSS). The Mitochondrial intermembrane portion of the chain corresponds to 106–128 (LAPTPELGGCWPPTGIHPLNPLE). Residues 129–152 (VPLLNTSVLLASGVSITWAHHSLM) traverse the membrane as a helical segment. Over 153 to 155 (EGN) the chain is Mitochondrial matrix. A helical transmembrane segment spans residues 156-183 (RNHMLQALFITISLGVYFTLLQASEYYE). Over 184-190 (APFTISD) the chain is Mitochondrial intermembrane. A helical transmembrane segment spans residues 191–223 (GVYGSTFFVATGFHGLHVIIGSTFLIVCFFRQL). Topologically, residues 224-232 (KFHFTSNHH) are mitochondrial matrix. Residues 233–256 (FGFEAAAWYWHFVDVVWLFLYVSI) traverse the membrane as a helical segment. The Mitochondrial intermembrane segment spans residues 257–261 (YWWGS).

Belongs to the cytochrome c oxidase subunit 3 family. In terms of assembly, component of the cytochrome c oxidase (complex IV, CIV), a multisubunit enzyme composed of 14 subunits. The complex is composed of a catalytic core of 3 subunits MT-CO1, MT-CO2 and MT-CO3, encoded in the mitochondrial DNA, and 11 supernumerary subunits COX4I, COX5A, COX5B, COX6A, COX6B, COX6C, COX7A, COX7B, COX7C, COX8 and NDUFA4, which are encoded in the nuclear genome. The complex exists as a monomer or a dimer and forms supercomplexes (SCs) in the inner mitochondrial membrane with NADH-ubiquinone oxidoreductase (complex I, CI) and ubiquinol-cytochrome c oxidoreductase (cytochrome b-c1 complex, complex III, CIII), resulting in different assemblies (supercomplex SCI(1)III(2)IV(1) and megacomplex MCI(2)III(2)IV(2)).

The protein resides in the mitochondrion inner membrane. The catalysed reaction is 4 Fe(II)-[cytochrome c] + O2 + 8 H(+)(in) = 4 Fe(III)-[cytochrome c] + 2 H2O + 4 H(+)(out). Its function is as follows. Component of the cytochrome c oxidase, the last enzyme in the mitochondrial electron transport chain which drives oxidative phosphorylation. The respiratory chain contains 3 multisubunit complexes succinate dehydrogenase (complex II, CII), ubiquinol-cytochrome c oxidoreductase (cytochrome b-c1 complex, complex III, CIII) and cytochrome c oxidase (complex IV, CIV), that cooperate to transfer electrons derived from NADH and succinate to molecular oxygen, creating an electrochemical gradient over the inner membrane that drives transmembrane transport and the ATP synthase. Cytochrome c oxidase is the component of the respiratory chain that catalyzes the reduction of oxygen to water. Electrons originating from reduced cytochrome c in the intermembrane space (IMS) are transferred via the dinuclear copper A center (CU(A)) of subunit 2 and heme A of subunit 1 to the active site in subunit 1, a binuclear center (BNC) formed by heme A3 and copper B (CU(B)). The BNC reduces molecular oxygen to 2 water molecules using 4 electrons from cytochrome c in the IMS and 4 protons from the mitochondrial matrix. The sequence is that of Cytochrome c oxidase subunit 3 (MT-CO3) from Antidorcas marsupialis (Springbok).